Reading from the N-terminus, the 347-residue chain is Heat-inducible transcription repressor HrcA (347 aa).

This sequence belongs to the HrcA family.

Functionally, negative regulator of class I heat shock genes (grpE-dnaK-dnaJ and groELS operons). Prevents heat-shock induction of these operons. The chain is Heat-inducible transcription repressor HrcA from Desulforamulus reducens (strain ATCC BAA-1160 / DSM 100696 / MI-1) (Desulfotomaculum reducens).